The primary structure comprises 732 residues: Kell blood group glycoprotein (732 aa).

A disordered region spans residues 1 to 37 (MEGGDQSEEEPRERSQAGGMGTLWSQESTPEERLPVE). Residues 1 to 47 (MEGGDQSEEEPRERSQAGGMGTLWSQESTPEERLPVEGSRPWAVARR) are Cytoplasmic-facing. The residue at position 7 (Ser7) is a Phosphoserine. Residues 48–67 (VLTAILILGLLLCFSVLLFY) traverse the membrane as a helical; Signal-anchor for type II membrane protein segment. Residues 68-732 (NFQNCGPRPC…LNPSSRCQLW (665 aa)) lie on the Extracellular side of the membrane. The Peptidase M13 domain occupies 76–732 (PCETSVCLDL…LNPSSRCQLW (657 aa)). A disulfide bond links Cys77 and Cys82. 2 N-linked (GlcNAc...) asparagine glycosylation sites follow: Asn94 and Asn115. 4 disulfides stabilise this stretch: Cys100–Cys717, Cys108–Cys682, Cys155–Cys410, and Cys610–Cys729. The N-linked (GlcNAc...) asparagine; in KEL2 antigen glycan is linked to Asn191. An N-linked (GlcNAc...) asparagine glycan is attached at Asn345. His581 serves as a coordination point for Zn(2+). Glu582 is an active-site residue. His585 contacts Zn(2+). Residue Asn627 is glycosylated (N-linked (GlcNAc...) asparagine). Glu634 provides a ligand contact to Zn(2+). Asp638 (proton donor) is an active-site residue. A disordered region spans residues 684 to 703 (KPSPQDSHDTHSPPHLRVHG).

Belongs to the peptidase M13 family. As to quaternary structure, heterodimer with XK; disulfide-linked. Requires Zn(2+) as cofactor. Post-translationally, N-glycosylated. Expressed at high levels in erythrocytes and testis (in Sertoli cells), and, at lower levels, in skeletal muscle, tonsils (in follicular dendritic cells), lymph node, spleen and appendix (at protein level). Also expressed in many adult and fetal nonerythroid tissues, including brain, spleen, lymph nodes and bone marrow.

The protein localises to the cell membrane. Zinc endopeptidase with endothelin-3-converting enzyme activity. Cleaves EDN1, EDN2 and EDN3, with a marked preference for EDN3. The polypeptide is Kell blood group glycoprotein (KEL) (Homo sapiens (Human)).